Reading from the N-terminus, the 300-residue chain is Ribosomal protein L11 methyltransferase (300 aa).

The S-adenosyl-L-methionine site is built by Thr-152, Gly-173, Asp-195, and Asn-234.

It belongs to the methyltransferase superfamily. PrmA family.

Its subcellular location is the cytoplasm. It catalyses the reaction L-lysyl-[protein] + 3 S-adenosyl-L-methionine = N(6),N(6),N(6)-trimethyl-L-lysyl-[protein] + 3 S-adenosyl-L-homocysteine + 3 H(+). Functionally, methylates ribosomal protein L11. This chain is Ribosomal protein L11 methyltransferase, found in Burkholderia thailandensis (strain ATCC 700388 / DSM 13276 / CCUG 48851 / CIP 106301 / E264).